The chain runs to 491 residues: Probable CtpA-like serine protease (491 aa).

Residues 1 to 22 are disordered; it reads MNDHQKNHATSQDDNTKSTPSK. Positions 8 to 22 are enriched in polar residues; it reads HATSQDDNTKSTPSK. A helical transmembrane segment spans residues 31-51; it reads LWHFILVILGIILLTSIITVV. Residues 119–201 form the PDZ domain; sequence TKQFNEGVSG…TYVTLTIKRG (83 aa). Residues Ser-324, Asp-335, and Lys-349 each act as charge relay system in the active site.

It belongs to the peptidase S41A family.

It localises to the cell membrane. This Staphylococcus epidermidis (strain ATCC 35984 / DSM 28319 / BCRC 17069 / CCUG 31568 / BM 3577 / RP62A) protein is Probable CtpA-like serine protease.